The sequence spans 500 residues: Lysine--tRNA ligase (500 aa).

Mg(2+) contacts are provided by Asp412 and Glu419.

The protein belongs to the class-II aminoacyl-tRNA synthetase family. As to quaternary structure, homodimer. Mg(2+) is required as a cofactor.

The protein resides in the cytoplasm. It catalyses the reaction tRNA(Lys) + L-lysine + ATP = L-lysyl-tRNA(Lys) + AMP + diphosphate. This chain is Lysine--tRNA ligase, found in Kineococcus radiotolerans (strain ATCC BAA-149 / DSM 14245 / SRS30216).